A 653-amino-acid chain; its full sequence is E3 ubiquitin-protein ligase TRIM32 (653 aa).

N-acetylalanine is present on Ala-2. An RING-type zinc finger spans residues 20–65; that stretch reads CPICMESFTEEQLRPKLLHCGHTICRQCLEKLLASSINGVRCPFCS. Ser-55 is modified (phosphoserine; by CHEK2). Cys-100, Cys-103, Cys-123, and His-128 together coordinate Zn(2+). A B box-type zinc finger spans residues 103–133; that stretch reads CGRRLPRQFCRSCGLVLCEPCREADHQPPGH. A coiled-coil region spans residues 138-197; the sequence is VKEAAEERRRDFGEKLTRLRELMGELQRRKAALEGVSKDLQARYKAVLQEYGHEERRVQD. A phosphoserine mark is found at Ser-328, Ser-335, and Ser-339. NHL repeat units lie at residues 358–401, 415–458, 459–499, 562–605, and 606–646; these read LKKM…FTRK, DSFV…YTLD, GHCV…FTVD, GRQI…FPKG, and GGYS…YSYH.

The protein belongs to the TRIM/RBCC family. It self-associates. Interacts with DTNBP1. Interacts with PIAS4/PIASY upon treatment with UVB and TNF-alpha. Interacts with AMBRA1; promoting activation of ULK1 through unanchored 'Lys-63'-linked polyubiquitin chains. Interacts with TICAM1 and TAX1BP1; these interactions target TICAM1 to TAX1BP1-mediated selective autophagic degradation. In terms of assembly, (Microbial infection) Interacts with S.typhimurium protein SseK3; SseK3 does not glycosylate TRIM32. Ubiquitinated. In terms of processing, phosphorylation at Ser-55 by CHEK2 under oxidative stress, activates the E3 ligase activity and promotes ATG7 ubiquitination leading to positive regulation of the autophagosme assembly. As to expression, spleen, thymus, prostate, testis, ovary, intestine, colon and skeletal muscle.

The protein localises to the cytoplasm. It localises to the mitochondrion. It is found in the endoplasmic reticulum. It carries out the reaction S-ubiquitinyl-[E2 ubiquitin-conjugating enzyme]-L-cysteine + [acceptor protein]-L-lysine = [E2 ubiquitin-conjugating enzyme]-L-cysteine + N(6)-ubiquitinyl-[acceptor protein]-L-lysine.. The protein operates within protein modification; protein ubiquitination. E3 ubiquitin ligase that plays a role in various biological processes including neural stem cell differentiation, innate immunity, inflammatory resonse and autophagy. Plays a role in virus-triggered induction of IFN-beta and TNF-alpha by mediating the ubiquitination of STING1. Mechanistically, targets STING1 for 'Lys-63'-linked ubiquitination which promotes the interaction of STING1 with TBK1. Regulates bacterial clearance and promotes autophagy in Mycobacterium tuberculosis-infected macrophages. Negatively regulates TLR3/4-mediated innate immune and inflammatory response by triggering the autophagic degradation of TICAM1 in an E3 activity-independent manner. Plays an essential role in oxidative stress induced cell death by inducing loss of transmembrane potential and enhancing mitochondrial reactive oxygen species (ROS) production during oxidative stress conditions. Ubiquitinates XIAP and targets it for proteasomal degradation. Ubiquitinates DTNBP1 (dysbindin) and promotes its degradation. May ubiquitinate BBS2. Ubiquitinates PIAS4/PIASY and promotes its degradation in keratinocytes treated with UVB and TNF-alpha. Also acts as a regulator of autophagy by mediating formation of unanchored 'Lys-63'-linked polyubiquitin chains that activate ULK1: interaction with AMBRA1 is required for ULK1 activation. Positively regulates dendritic branching by promoting ubiquitination and subsequent degradation of the epigenetic factor CDYL. Under metabolic stress and phosphorylation by CHK2, mediates 'Lys-63'-linked ubiquitination of ATG7 at 'Lys-45' to initiate autophagy. Its function is as follows. (Microbial infection) May play a significant role in mediating the biological activity of the HIV-1 Tat protein in vivo. Binds specifically to the activation domain of HIV-1 Tat and can also interact with the HIV-2 and EIAV Tat proteins in vivo. This Homo sapiens (Human) protein is E3 ubiquitin-protein ligase TRIM32.